The primary structure comprises 228 residues: MTLDIEEKEEIVTSLTKAEIHLSGLDENWKRLVKLVGNYRPNRSMEKKEPYEELIRAVASQQLHSKAANAIFNRFKSISNNGQFPTPEEIRDMDFEIMRACGFSARKIDSLKSIAEATISGLIPTKEEAERLSNEELIERLTQIKGIGRWTVEMLLIFSLNRDDVMPADDLSIRNGYRYLHRLPKIPTKMYVLKHSEICAPFRTAAAWYLWKTSKLADYTKPVRPKKH.

D170 acts as the Proton acceptor in catalysis.

Belongs to the alkylbase DNA glycosidase AlkA family.

The catalysed reaction is Hydrolysis of alkylated DNA, releasing 3-methyladenine, 3-methylguanine, 7-methylguanine and 7-methyladenine.. Hydrolysis of the deoxyribose N-glycosidic bond to excise 3-methyladenine or 7-methyladenine from the damaged DNA polymer formed by alkylation lesions. Can release ethylated and propylated bases from DNA in addition to 3-methyladenine. In Schizosaccharomyces pombe (strain 972 / ATCC 24843) (Fission yeast), this protein is DNA-3-methyladenine glycosylase 1 (mag1).